A 194-amino-acid chain; its full sequence is Peptidyl-tRNA hydrolase (194 aa).

Tyr-17 provides a ligand contact to tRNA. His-22 (proton acceptor) is an active-site residue. TRNA-binding residues include Phe-68, Asn-70, and Asn-116.

Belongs to the PTH family. As to quaternary structure, monomer.

It localises to the cytoplasm. The enzyme catalyses an N-acyl-L-alpha-aminoacyl-tRNA + H2O = an N-acyl-L-amino acid + a tRNA + H(+). Functionally, hydrolyzes ribosome-free peptidyl-tRNAs (with 1 or more amino acids incorporated), which drop off the ribosome during protein synthesis, or as a result of ribosome stalling. Catalyzes the release of premature peptidyl moieties from peptidyl-tRNA molecules trapped in stalled 50S ribosomal subunits, and thus maintains levels of free tRNAs and 50S ribosomes. The polypeptide is Peptidyl-tRNA hydrolase (Actinobacillus pleuropneumoniae serotype 5b (strain L20)).